A 359-amino-acid polypeptide reads, in one-letter code: Chorismate synthase (359 aa).

Residue Arg-47 participates in NADP(+) binding. FMN-binding positions include 123–125 (RSS), Gly-283, 298–302 (KPTSS), and Arg-326.

It belongs to the chorismate synthase family. In terms of assembly, homotetramer. FMNH2 is required as a cofactor.

The catalysed reaction is 5-O-(1-carboxyvinyl)-3-phosphoshikimate = chorismate + phosphate. The protein operates within metabolic intermediate biosynthesis; chorismate biosynthesis; chorismate from D-erythrose 4-phosphate and phosphoenolpyruvate: step 7/7. Its function is as follows. Catalyzes the anti-1,4-elimination of the C-3 phosphate and the C-6 proR hydrogen from 5-enolpyruvylshikimate-3-phosphate (EPSP) to yield chorismate, which is the branch point compound that serves as the starting substrate for the three terminal pathways of aromatic amino acid biosynthesis. This reaction introduces a second double bond into the aromatic ring system. The polypeptide is Chorismate synthase (Chlamydia pneumoniae (Chlamydophila pneumoniae)).